Reading from the N-terminus, the 161-residue chain is Nucleotide-binding protein H16_A3060 (161 aa).

The protein belongs to the YajQ family.

Its function is as follows. Nucleotide-binding protein. This chain is Nucleotide-binding protein H16_A3060, found in Cupriavidus necator (strain ATCC 17699 / DSM 428 / KCTC 22496 / NCIMB 10442 / H16 / Stanier 337) (Ralstonia eutropha).